The sequence spans 353 residues: Photosystem II protein D1 (353 aa).

An N-acetylthreonine modification is found at T2. T2 is subject to Phosphothreonine. 3 helical membrane-spanning segments follow: residues Y29–S46, H118–L133, and W142–A156. H118 lines the chlorophyll a pocket. Y126 is a binding site for pheophytin a. [CaMn4O5] cluster contacts are provided by D170 and E189. Residues F197–L218 form a helical membrane-spanning segment. Residue H198 participates in chlorophyll a binding. Residues H215 and S264–F265 each bind a quinone. Fe cation is bound at residue H215. A Fe cation-binding site is contributed by H272. The chain crosses the membrane as a helical span at residues F274–L288. Positions 332, 333, 342, and 344 each coordinate [CaMn4O5] cluster. Residues A345 to G353 constitute a propeptide that is removed on maturation.

The protein belongs to the reaction center PufL/M/PsbA/D family. In terms of assembly, PSII is composed of 1 copy each of membrane proteins PsbA, PsbB, PsbC, PsbD, PsbE, PsbF, PsbH, PsbI, PsbJ, PsbK, PsbL, PsbM, PsbT, PsbX, PsbY, PsbZ, Psb30/Ycf12, at least 3 peripheral proteins of the oxygen-evolving complex and a large number of cofactors. It forms dimeric complexes. Requires The D1/D2 heterodimer binds P680, chlorophylls that are the primary electron donor of PSII, and subsequent electron acceptors. It shares a non-heme iron and each subunit binds pheophytin, quinone, additional chlorophylls, carotenoids and lipids. D1 provides most of the ligands for the Mn4-Ca-O5 cluster of the oxygen-evolving complex (OEC). There is also a Cl(-1) ion associated with D1 and D2, which is required for oxygen evolution. The PSII complex binds additional chlorophylls, carotenoids and specific lipids. as cofactor. Post-translationally, tyr-161 forms a radical intermediate that is referred to as redox-active TyrZ, YZ or Y-Z. In terms of processing, C-terminally processed by CTPA; processing is essential to allow assembly of the oxygen-evolving complex and thus photosynthetic growth.

The protein localises to the plastid. The protein resides in the chloroplast thylakoid membrane. It catalyses the reaction 2 a plastoquinone + 4 hnu + 2 H2O = 2 a plastoquinol + O2. Functionally, photosystem II (PSII) is a light-driven water:plastoquinone oxidoreductase that uses light energy to abstract electrons from H(2)O, generating O(2) and a proton gradient subsequently used for ATP formation. It consists of a core antenna complex that captures photons, and an electron transfer chain that converts photonic excitation into a charge separation. The D1/D2 (PsbA/PsbD) reaction center heterodimer binds P680, the primary electron donor of PSII as well as several subsequent electron acceptors. This is Photosystem II protein D1 from Nymphaea alba (White water-lily).